The chain runs to 675 residues: Alpha-1,4-glucan:maltose-1-phosphate maltosyltransferase (675 aa).

K256, Q316, and D351 together coordinate alpha-maltose 1-phosphate. D386 (nucleophile) is an active-site residue. N387 contacts alpha-maltose 1-phosphate. The Proton donor role is filled by E415. Residue 525 to 526 (KY) coordinates alpha-maltose 1-phosphate.

This sequence belongs to the glycosyl hydrolase 13 family. GlgE subfamily. Homodimer.

It catalyses the reaction alpha-maltose 1-phosphate + [(1-&gt;4)-alpha-D-glucosyl](n) = [(1-&gt;4)-alpha-D-glucosyl](n+2) + phosphate. Functionally, maltosyltransferase that uses maltose 1-phosphate (M1P) as the sugar donor to elongate linear or branched alpha-(1-&gt;4)-glucans. Is involved in a branched alpha-glucan biosynthetic pathway from trehalose, together with TreS, Mak and GlgB. The polypeptide is Alpha-1,4-glucan:maltose-1-phosphate maltosyltransferase (Corynebacterium glutamicum (strain ATCC 13032 / DSM 20300 / JCM 1318 / BCRC 11384 / CCUG 27702 / LMG 3730 / NBRC 12168 / NCIMB 10025 / NRRL B-2784 / 534)).